We begin with the raw amino-acid sequence, 393 residues long: Elongation factor Tu (393 aa).

The 199-residue stretch at 6-204 (KPHINVGTIG…ALEKIELPMR (199 aa)) folds into the tr-type G domain. A G1 region spans residues 15–22 (GHVDHGKT). 15–22 (GHVDHGKT) contacts GTP. Threonine 22 is a binding site for Mg(2+). Positions 58–62 (GITIS) are G2. Positions 79-82 (DCPG) are G3. GTP contacts are provided by residues 79 to 83 (DCPGH) and 134 to 137 (NKCD). The interval 134 to 137 (NKCD) is G4. Residues 172-174 (SAV) form a G5 region.

This sequence belongs to the TRAFAC class translation factor GTPase superfamily. Classic translation factor GTPase family. EF-Tu/EF-1A subfamily. As to quaternary structure, monomer.

The protein localises to the cytoplasm. It catalyses the reaction GTP + H2O = GDP + phosphate + H(+). Functionally, GTP hydrolase that promotes the GTP-dependent binding of aminoacyl-tRNA to the A-site of ribosomes during protein biosynthesis. The polypeptide is Elongation factor Tu (Anaplasma phagocytophilum (strain HZ)).